Reading from the N-terminus, the 197-residue chain is Negative modulator of initiation of replication (197 aa).

Interaction with DNA regions lie at residues 100-101, 129-133, and 163-169; these read AV, RTRVY, and NTNSGRK.

This sequence belongs to the SeqA family. In terms of assembly, homodimer. Polymerizes to form helical filaments.

Its subcellular location is the cytoplasm. Functionally, negative regulator of replication initiation, which contributes to regulation of DNA replication and ensures that replication initiation occurs exactly once per chromosome per cell cycle. Binds to pairs of hemimethylated GATC sequences in the oriC region, thus preventing assembly of replication proteins and re-initiation at newly replicated origins. Repression is relieved when the region becomes fully methylated. The sequence is that of Negative modulator of initiation of replication from Haemophilus influenzae (strain ATCC 51907 / DSM 11121 / KW20 / Rd).